Consider the following 274-residue polypeptide: Diaminopimelate epimerase (274 aa).

Asparagine 11, glutamine 44, and asparagine 64 together coordinate substrate. Cysteine 73 (proton donor) is an active-site residue. Substrate is bound by residues 74–75 (GN), asparagine 157, asparagine 190, and 208–209 (ER). Cysteine 217 serves as the catalytic Proton acceptor. 218–219 (GS) contributes to the substrate binding site.

The protein belongs to the diaminopimelate epimerase family. Homodimer.

The protein resides in the cytoplasm. The enzyme catalyses (2S,6S)-2,6-diaminopimelate = meso-2,6-diaminopimelate. Its pathway is amino-acid biosynthesis; L-lysine biosynthesis via DAP pathway; DL-2,6-diaminopimelate from LL-2,6-diaminopimelate: step 1/1. Its function is as follows. Catalyzes the stereoinversion of LL-2,6-diaminopimelate (L,L-DAP) to meso-diaminopimelate (meso-DAP), a precursor of L-lysine and an essential component of the bacterial peptidoglycan. This chain is Diaminopimelate epimerase, found in Haemophilus influenzae (strain PittEE).